We begin with the raw amino-acid sequence, 382 residues long: C-type lectin domain-containing protein 38 (382 aa).

At Met-1–Leu-40 the chain is on the cytoplasmic side. The chain crosses the membrane as a helical span at residues Ile-41 to Phe-61. The Extracellular segment spans residues Phe-62–Phe-382. Residues Asn-97–Ser-116 are disordered. Over residues Thr-100–Ser-116 the composition is skewed to low complexity. 2 N-linked (GlcNAc...) asparagine glycosylation sites follow: Asn-108 and Asn-189. 2 C-type lectin domains span residues Val-129 to Glu-250 and Tyr-264 to Lys-377. 4 disulfides stabilise this stretch: Cys-150–Cys-249, Cys-223–Cys-241, Cys-285–Cys-376, and Cys-348–Cys-368.

As to expression, expressed in ventral cord motor neurons and PLM touch neurons.

The protein resides in the membrane. Involved in negative modulation of unc-40-mediated axon outgrowth. Required for proper presynaptic development in axons that have reached their targets. May function in concert with E3 ubiquitin-protein ligase rpm-1 in regulating axon outgrowth. The polypeptide is C-type lectin domain-containing protein 38 (Caenorhabditis elegans).